The chain runs to 337 residues: Neurogenic differentiation factor 6 (337 aa).

Residues 43–82 (LRGKSIKRAPGEETEKEEEEEDREEEDENGLPRRRGLRKK) are disordered. Acidic residues predominate over residues 54 to 71 (EETEKEEEEEDREEEDEN). The Nuclear localization signal signature appears at 80 to 86 (RKKKTTK). The bHLH domain occupies 94–146 (FRRQEANARERNRMHGLNDALDNLRKVVPCYSKTQKLSKIETLRLAKNYIWAL).

Efficient DNA binding requires dimerization with another bHLH protein.

The protein localises to the nucleus. In terms of biological role, activates E box-dependent transcription in collaboration with TCF3/E47. May be a trans-acting factor involved in the development and maintenance of the mammalian nervous system. Transactivates the promoter of its own gene. This chain is Neurogenic differentiation factor 6 (NEUROD6), found in Homo sapiens (Human).